Here is a 271-residue protein sequence, read N- to C-terminus: Ribosomal RNA small subunit methyltransferase J (271 aa).

S-adenosyl-L-methionine is bound by residues 116 to 117 (RD), 132 to 133 (ER), 168 to 169 (SS), and Asp190.

This sequence belongs to the methyltransferase superfamily. RsmJ family.

It localises to the cytoplasm. It carries out the reaction guanosine(1516) in 16S rRNA + S-adenosyl-L-methionine = N(2)-methylguanosine(1516) in 16S rRNA + S-adenosyl-L-homocysteine + H(+). Its function is as follows. Specifically methylates the guanosine in position 1516 of 16S rRNA. The polypeptide is Ribosomal RNA small subunit methyltransferase J (Shewanella piezotolerans (strain WP3 / JCM 13877)).